The following is a 543-amino-acid chain: Adenosine deaminase 2 (543 aa).

The N-terminal stretch at 1-26 (MFLKFKNIFFIVLTLSIVFNGLIVNS) is a signal peptide. Residues 31-54 (INNKNNNNNNNNKDLSSSESGSSS) show a composition bias toward low complexity. Residues 31–58 (INNKNNNNNNNNKDLSSSESGSSSDINP) form a disordered region. Residue asparagine 126 is glycosylated (N-linked (GlcNAc...) asparagine). Histidine 144 and histidine 146 together coordinate Zn(2+). Asparagine 179 is a glycosylation site (N-linked (GlcNAc...) asparagine). 232–239 (WRKFDGIF) is a substrate binding site. Residues asparagine 309 and asparagine 326 are each glycosylated (N-linked (GlcNAc...) asparagine). Glycine 355 contributes to the substrate binding site. Histidine 389 lines the Zn(2+) pocket. Residue glutamate 392 is the Proton donor of the active site. A glycan (N-linked (GlcNAc...) asparagine) is linked at asparagine 397. Residue histidine 414 is the Proton acceptor of the active site. A Zn(2+)-binding site is contributed by aspartate 471. Aspartate 472 provides a ligand contact to substrate. Residues asparagine 508 and asparagine 514 are each glycosylated (N-linked (GlcNAc...) asparagine).

This sequence belongs to the metallo-dependent hydrolases superfamily. Adenosine and AMP deaminases family. ADGF subfamily. It depends on Zn(2+) as a cofactor.

The protein resides in the secreted. It carries out the reaction adenosine + H2O + H(+) = inosine + NH4(+). Its function is as follows. Adenosine deaminase that may contribute to the degradation of extracellular adenosine, a signaling molecule that controls a variety of cellular responses. May play a role in the regulation of cell proliferation. The polypeptide is Adenosine deaminase 2 (Dictyostelium discoideum (Social amoeba)).